The chain runs to 466 residues: MAKTLYEKVWDSHVVVANEGEAPLIYVDRHLVHEVTSPQAFSGLKVAGRRLRAPEKTFATMDHNTSTKSASLDALSPMARIQVETLQDNCKEFGIKLYDIHHKNQGIVHVMGPELGITLPGTVIVCGDSHTATHGAFGALAFGIGTSEVEHVMATQTLRQNKAKTMKIEVKGHVTPGITAKDIVLAIIGKIGMDGGTGYVVEFCGEAIEALSMEGRMTVCNMAIEMGAKAGMIAPDATTAEYLKGREFAPKAESWEQAIEAWSELKTDADAVFDSTVILEAADIAPQLTWGTNPGQVVAIDGVVPNPQDEPNATVKASIEKALEYVALSAGTSMKDVSINKVFIGSCTNSRIEDLRDAALHAKGKHVAEGVTAIVVPGSGLVKEQAEAEGLDKIFIEAGFEWRLPGCSMCLAMNDDRLEAGDRCASTSNRNFEGRQGRGSRTHLVSPAMAAAAAVAGHFVDIRQTL.

Residues Cys347, Cys407, and Cys410 each coordinate [4Fe-4S] cluster.

This sequence belongs to the aconitase/IPM isomerase family. LeuC type 1 subfamily. In terms of assembly, heterodimer of LeuC and LeuD. The cofactor is [4Fe-4S] cluster.

It catalyses the reaction (2R,3S)-3-isopropylmalate = (2S)-2-isopropylmalate. It functions in the pathway amino-acid biosynthesis; L-leucine biosynthesis; L-leucine from 3-methyl-2-oxobutanoate: step 2/4. Functionally, catalyzes the isomerization between 2-isopropylmalate and 3-isopropylmalate, via the formation of 2-isopropylmaleate. The protein is 3-isopropylmalate dehydratase large subunit of Shewanella woodyi (strain ATCC 51908 / MS32).